We begin with the raw amino-acid sequence, 420 residues long: Acetylornithine aminotransferase (420 aa).

Pyridoxal 5'-phosphate-binding positions include 118 to 119 (GA) and phenylalanine 151. Arginine 154 is a binding site for N(2)-acetyl-L-ornithine. 242–245 (DEVQ) serves as a coordination point for pyridoxal 5'-phosphate. An N6-(pyridoxal phosphate)lysine modification is found at lysine 271. A N(2)-acetyl-L-ornithine-binding site is contributed by serine 298. Threonine 299 is a binding site for pyridoxal 5'-phosphate.

This sequence belongs to the class-III pyridoxal-phosphate-dependent aminotransferase family. ArgD subfamily. As to quaternary structure, homodimer. Pyridoxal 5'-phosphate serves as cofactor.

It localises to the cytoplasm. It catalyses the reaction N(2)-acetyl-L-ornithine + 2-oxoglutarate = N-acetyl-L-glutamate 5-semialdehyde + L-glutamate. It participates in amino-acid biosynthesis; L-arginine biosynthesis; N(2)-acetyl-L-ornithine from L-glutamate: step 4/4. The chain is Acetylornithine aminotransferase from Parasynechococcus marenigrum (strain WH8102).